The primary structure comprises 137 residues: Lysozyme (137 aa).

The first 18 residues, 1-18 (MQKLIIFALVVLCVGSEA), serve as a signal peptide directing secretion. Positions 19–137 (KTFTRCGLVH…QGSLPDISSC (119 aa)) constitute a C-type lysozyme domain. Cystine bridges form between cysteine 24-cysteine 137, cysteine 45-cysteine 127, cysteine 79-cysteine 93, and cysteine 89-cysteine 107. Residues glutamate 50 and aspartate 67 contribute to the active site.

This sequence belongs to the glycosyl hydrolase 22 family.

The enzyme catalyses Hydrolysis of (1-&gt;4)-beta-linkages between N-acetylmuramic acid and N-acetyl-D-glucosamine residues in a peptidoglycan and between N-acetyl-D-glucosamine residues in chitodextrins.. In terms of biological role, lysozymes have primarily a bacteriolytic function; those in tissues and body fluids are associated with the monocyte-macrophage system and enhance the activity of immunoagents. Active against E.coli and M.luteus. This Bombyx mori (Silk moth) protein is Lysozyme.